The chain runs to 600 residues: Gamma-terpinene synthase, chloroplastic (600 aa).

The N-terminal 40 residues, 1 to 40, are a transit peptide targeting the chloroplast; the sequence is MALNLLSSLPAACNFTRLSLPLSSKVNGFVPPITQVQYPM. The Mg(2+) site is built by aspartate 353, aspartate 357, aspartate 498, and glutamate 506. The DDXXD motif signature appears at 353 to 357; that stretch reads DDVYD.

Belongs to the terpene synthase family. The cofactor is Mn(2+). Mg(2+) is required as a cofactor.

Its subcellular location is the plastid. It localises to the chloroplast. It catalyses the reaction (2E)-geranyl diphosphate = gamma-terpinene + diphosphate. Its pathway is secondary metabolite biosynthesis; terpenoid biosynthesis. Its activity is regulated as follows. Inhibited by 100 mM KCl. Monoterpene synthase which catalyzes the conversion of geranyl diphosphate to gamma-terpinene and the minor products limonene, alpha-pinene, beta-pinene, alpha-terpinolene, alpha-thujene, alpha-terpinene, myrcene and sabinene. This is Gamma-terpinene synthase, chloroplastic from Citrus limon (Lemon).